Reading from the N-terminus, the 143-residue chain is Na(+)/H(+) antiporter subunit B (143 aa).

The next 4 membrane-spanning stretches (helical) occupy residues L9–L31, A36–Y58, F71–G93, and A117–I139.

The protein belongs to the CPA3 antiporters (TC 2.A.63) subunit B family. As to quaternary structure, forms a heterooligomeric complex that consists of seven subunits: MrpA, MrpB, MrpC, MrpD, MrpE, MrpF and MrpG.

The protein resides in the cell membrane. Its function is as follows. Mrp complex is a Na(+)/H(+) antiporter that is considered to be the major Na(+) excretion system in B.subtilis. Has a major role in Na(+) resistance and a minor role in Na(+)- and K(+)-dependent pH homeostasis as compared to TetB. MrpA may be the actual Na(+)/H(+) antiporter, although the six other Mrp proteins are all required for Na(+)/H(+) antiport activity and Na(+) resistance. MrpA is required for initiation of sporulation when external Na(+) concentration increases. Also transports Li(+) but not K(+), Ca(2+) or Mg(2+). This chain is Na(+)/H(+) antiporter subunit B (mrpB), found in Bacillus subtilis (strain 168).